The primary structure comprises 243 residues: Triosephosphate isomerase (243 aa).

9–11 contacts substrate; sequence NWK. The Electrophile role is filled by H96. The active-site Proton acceptor is the E165. Substrate is bound by residues G171, S204, and 225 to 226; that span reads GG.

The protein belongs to the triosephosphate isomerase family. Homodimer.

The protein resides in the cytoplasm. The enzyme catalyses D-glyceraldehyde 3-phosphate = dihydroxyacetone phosphate. It participates in carbohydrate biosynthesis; gluconeogenesis. Its pathway is carbohydrate degradation; glycolysis; D-glyceraldehyde 3-phosphate from glycerone phosphate: step 1/1. In terms of biological role, involved in the gluconeogenesis. Catalyzes stereospecifically the conversion of dihydroxyacetone phosphate (DHAP) to D-glyceraldehyde-3-phosphate (G3P). The sequence is that of Triosephosphate isomerase from Nostoc punctiforme (strain ATCC 29133 / PCC 73102).